The primary structure comprises 691 residues: DNA ligase (691 aa).

NAD(+) contacts are provided by residues 41-45 (DAEYD), 90-91 (SL), and E130. K132 acts as the N6-AMP-lysine intermediate in catalysis. The NAD(+) site is built by R153, E190, K307, and K331. Zn(2+)-binding residues include C425, C428, C443, and C449. The region spanning 610–691 (APQGVLAGKT…MHTLLEGHAR (82 aa)) is the BRCT domain.

This sequence belongs to the NAD-dependent DNA ligase family. LigA subfamily. Mg(2+) is required as a cofactor. The cofactor is Mn(2+).

The catalysed reaction is NAD(+) + (deoxyribonucleotide)n-3'-hydroxyl + 5'-phospho-(deoxyribonucleotide)m = (deoxyribonucleotide)n+m + AMP + beta-nicotinamide D-nucleotide.. Its function is as follows. DNA ligase that catalyzes the formation of phosphodiester linkages between 5'-phosphoryl and 3'-hydroxyl groups in double-stranded DNA using NAD as a coenzyme and as the energy source for the reaction. It is essential for DNA replication and repair of damaged DNA. This Burkholderia pseudomallei (strain 668) protein is DNA ligase.